Here is a 369-residue protein sequence, read N- to C-terminus: MAAKKLLILPGDGIGVEVMAQVRRIIDWMGRKRKIEFEITEGLLGGAAYDVHGTPYPAETLEAALAADAVLLGAVGGPKWDDLPFDKKPERGLLGIRKDMGLFANLRPATVLEALADASTLKAEVVSGLDIMILRELTGGLYFGQPRGIDTLPDGTRKGYNTLVYTTPEIQRIGRVAFDLARKRNKKLCSVDKANVLECTVLWREEMIKLQKEEFPDVELTHMYVDNAAMQLVRNPKQFDVMVTENMFGDILSDCAAMLTGSLGMLPSASLGEADAQGKRKALYEPVHGSAPDIAGKDMANPLATIMSFAMCLRYSFDMAAEADLIETAVKNVLKGGLRTADIMQPGKAKVSTTVMGEAVVRELDKLNA.

77–90 (GPKWDDLPFDKKPE) contacts NAD(+). The substrate site is built by R97, R107, R135, and D226. Mg(2+) is bound by residues D226, D250, and D254. Residue 289–301 (GSAPDIAGKDMAN) coordinates NAD(+).

It belongs to the isocitrate and isopropylmalate dehydrogenases family. LeuB type 1 subfamily. As to quaternary structure, homodimer. The cofactor is Mg(2+). Mn(2+) is required as a cofactor.

The protein resides in the cytoplasm. It catalyses the reaction (2R,3S)-3-isopropylmalate + NAD(+) = 4-methyl-2-oxopentanoate + CO2 + NADH. It functions in the pathway amino-acid biosynthesis; L-leucine biosynthesis; L-leucine from 3-methyl-2-oxobutanoate: step 3/4. Catalyzes the oxidation of 3-carboxy-2-hydroxy-4-methylpentanoate (3-isopropylmalate) to 3-carboxy-4-methyl-2-oxopentanoate. The product decarboxylates to 4-methyl-2 oxopentanoate. In Paramagnetospirillum magneticum (strain ATCC 700264 / AMB-1) (Magnetospirillum magneticum), this protein is 3-isopropylmalate dehydrogenase.